The chain runs to 93 residues: Small hydrophobic protein (93 aa).

2 helical membrane-spanning segments follow: residues 5 to 25 (LIII…VLAY) and 32 to 52 (AFGP…IYFP).

Its subcellular location is the membrane. This chain is Small hydrophobic protein, found in Tupaia virus (isolate Tupaia/Thailand/-/1986) (TUPV).